Here is a 3432-residue protein sequence, read N- to C-terminus: MTKKPGGPGKNRAINMLKRGLPRVFPLVGVKRVVMSLLDGRGPVRFVLALITFFKFTALAPTKALLGRWKAVEKSVAMKHLTSFKRELGTLIDAVNKRGRKQNKRGGNEGSIMWLASLAVVIACAGAMKLSNFQGKLLMTINNTDIADVIVIPTSKGENRCWVRAIDVGYMCEDTITYECPKLTMGNDPEDVDCWCDNQEVYVQYGRCTRTRHSKRSRRSVSVQTHGESSLVNKKEAWLDSTKATRYLMKTENWIIRNPGYAFLAAVLGWMLGSNNGQRVVFTILLLLVAPAYSFNCLGMGNRDFIEGASGATWVDLVLEGDSCLTIMANDKPTLDVRMINIEASQLAEVRSYCYHASVTDISTVARCPTTGEAHNEKRADSSYVCKQGFTDRGWGNGCGLFGKGSIDTCAKFSCTSKAIGRTIQPENIKYEVGIFVHGTTTSENHGNYSAQVGASQAAKFTVTPNAPSITLKLGDYGEVTLDCEPRSGLNTEAFYVMTVGSKSFLVHREWFHDLALPWTSPSSTAWRNRELLMEFEGAHATKQSVVALGSQEGGLHQALAGAIVVEYSSSVKLTSGHLKCRLKMDKLALKGTTYGMCTEKFSFAKNPVDTGHGTVVIELSYSGSDGPCKIPIVSVASLNDMTPVGRLVTVNPFVATSSANSKVLVEMEPPFGDSYIVVGRGDKQINHHWHKAGSTLGKAFSTTLKGAQRLAALGDTAWDFGSIGGVFNSIGRAVHQVFGGAFRTLFGGMSWITQGLMGALLLWMGVNARDRSIALAFLATGGVLVFLATNVHADTGCAIDITRKEMRCGSGIFVHNDVEAWVDRYKYLPETPRSLAKIVHKAHKEGVCGVRSVTRLEHQMWEAVRDELNVLLKENAVDLSVVVNKPVGRYRSAPKRLSMTQEKFEMGWKAWGKSILFAPELANSTFVVDGPETKECPDEHRAWNSMQIEDFGFGITSTRVWLKIREESTDECDGAIIGTAVKGHVAVHSDLSYWIESRYNDTWKLERAVFGEVKSCTWPETHTLWGDDVEESELIIPHTIAGPKSKHNRREGYKTQNQGPWDENGIVLDFDYCPGTKVTITEDCSKRGPSVRTTTDSGKLITDWCCRSCSLPPLRFRTENGCWYGMEIRPVMHDETTLVRSQVDAFKGEMVDPFQLGLLVMFLATQEVLRKRWTARLTIPAVLGVLLVLMLGGITYTDLARYVVLVAAAFAEANSGGDVLHLALIAVFKIQPAFLVMNMLSTRWTNQENVILVLGAAFFQLASVDLQIGVHGILNAAAIAWMIVRAITFPTTSSVTMPVLALLTPGMRALYLDTYRIILLVIGICSLLHERKKTMAKKKGAVLLGLALTSTGWFSPTTIAAGLMVCNPNKKRGWPATEFLSAVGLMFAIVGGLAELDIESMSIPFMLAGLMAVSYVVSGKATDMWLERAADISWEMDAAITGSSRRLDVKLDDDGDFHLIDDPGVPWKVWVLRMSCIGLAALTPWAIVPAAFGYWLTLKTTKRGGVFWDTPSPKPCSKGDTTTGVYRIMARGILGTYQAGVGVMYENVFHTLWHTTRGAAIMSGEGKLTPYWGSVREDRIAYGGPWRFDRKWNGTDDVQVIVVEPGKAAVNIQTKPGVFRTPFGEVGAVSLDYPRGTSGSPILDSNGDIIGLYGNGVELGDGSYVSAIVQGDRQEEPVPEAYTPNMLRKRQMTVLDLHPGSGKTRKILPQIIKDAIQQRLRTAVLAPTRVVAAEMAEALRGLPVRYQTSAVQREHQGNEIVDVMCHATLTHRLMSPNRVPNYNLFVMDEAHFTDPASIAARGYIATKVELGEAAAIFMTATPPGTTDPFPDSNAPIHDLQDEIPDRAWSSGYEWITEYAGKTVWFVASVKMGNEIAMCLQRAGKKVIQLNRKSYDTEYPKCKNGDWDFVITTDISEMGANFGASRVIDCRKSVKPTILEEGEGRVILGNPSPITSASAAQRRGRVGRNPNQVGDEYHYGGATSEDDSNLAHWTEAKIMLDNIHMPNGLVAQLYGPEREKAFTMDGEYRLRGEEKKNFLELLRTADLPVWLAYKVASNGIQYTDRKWCFDGPRTNAILEDNTEVEIVTRMGERKILKPRWLDARVYADHQALKWFKDFAAGKRSAVSFIEVLGRMPEHFMGKTREALDTMYLVATAEKGGKAHRMALEELPDALETITLIVAITVMTGGFFLLMMQRKGIGKMGLGALVLTLATFFLWAAEVPGTKIAGTLLIALLLMVVLIPEPEKQRSQTDNQLAVFLICVLTVVGVVAANEYGMLEKTKADLKSMFGGKTQASGLTGLPSMALDLRPATAWALYGGSTVVLTPLLKHLITSEYVTTSLASINSQAGSLFVLPRGVPFTDLDLTVGLVFLGCWGQITLTTFLTAMVLATLHYGYMLPGWQAEALRAAQRRTAAGIMKNAVVDGMVATDVPELERTTPLMQKKVGQVLLIGVSVAAFLVNPNVTTVREAGVLVTAATLTLWDNGASAVWNSTTATGLCHVMRGSYLAGGSIAWTLIKNADKPSLKRGRPGGRTLGEQWKEKLNAMSREEFFKYRREAIIEVDRTEARRARRENNIVGGHPVSRGSAKLRWLVEKGFVSPIGKVIDLGCGRGGWSYYAATLKKVQEVRGYTKGGAGHEEPMLMQSYGWNLVSLKSGVDVFYKPSEPSDTLFCDIGESSPSPEVEEQRTLRVLEMTSDWLHRGPREFCIKVLCPYMPKVIEKMEVLQRRFGGGLVRLPLSRNSNHEMYWVSGAAGNVVHAVNMTSQVLLGRMDRTVWRGPKYEEDVNLGSGTRAVGKGEVHSNQEKIKKRIQKLKEEFATTWHKDPEHPYRTWTYHGSYEVKATGSASSLVNGVVELMSKPWDAIANVTTMAMTDTTPFGQQRVFKEKVDTKAPEPPAGAKEVLNETTNWLWAHLSREKRPRLCTKEEFIKKVNSNAALGAVFAEQNQWSTAREAVDDPRFWEMVDEERENHLRGECHTCIYNMMGKREKKPGEFGKAKGSRAIWFMWLGARYLEFEALGFLNEDHWLSRENSGGGVEGSGVQKLGYILRDIAGKQGGKMYADDTAGWDTRITRTDLENEAKVLELLDGEHRMLARAIIELTYRHKVVKVMRPAAEGKTVMDVISREDQRGSGQVVTYALNTFTNIAVQLVRLMEAEGVIGPQHLEQLPRKTKIAVRTWLFENGEERVTRMAISGDDCVVKPLDDRFATALHFLNAMSKVRKDIQEWKPSHGWHDWQQVPFCSNHFQEIVMKDGRSIVVPCRGQDELIGRARISPGAGWNVKDTACLAKAYAQMWLLLYFHRRDLRLMANAICSAVPVDWVPTGRTSWSIHSKGEWMTTEDMLQVWNRVWIEENEWMMDKTPITSWTDVPYVGKREDIWCGSLIGTRSRATWAENIYAAINQVRAVIGKENYVDYMTSLRRYEDVLIQEDRVI.

Positions 2–15 (TKKPGGPGKNRAIN) are interaction with host EXOC1. Topologically, residues 2-109 (TKKPGGPGKN…RKQNKRGGNE (108 aa)) are cytoplasmic. The hydrophobic; homodimerization of capsid protein C stretch occupies residues 37 to 72 (LLDGRGPVRFVLALITFFKFTALAPTKALLGRWKAV). A propeptide spans 106-127 (GGNEGSIMWLASLAVVIACAGA) (ER anchor for the capsid protein C, removed in mature form by serine protease NS3). Residues 110 to 130 (GSIMWLASLAVVIACAGAMKL) form a helical membrane-spanning segment. Residues 131 to 253 (SNFQGKLLMT…ATRYLMKTEN (123 aa)) lie on the Extracellular side of the membrane. A glycan (N-linked (GlcNAc...) asparagine; by host) is linked at N142. A helical membrane pass occupies residues 254–274 (WIIRNPGYAFLAAVLGWMLGS). At 275-279 (NNGQR) the chain is on the cytoplasmic side. A helical membrane pass occupies residues 280 to 294 (VVFTILLLLVAPAYS). Residues 295–746 (FNCLGMGNRD…QVFGGAFRTL (452 aa)) are Extracellular-facing. Disulfide bonds link C297–C324, C354–C410, C354–C415, C368–C399, C386–C410, and C386–C415. The fusion peptide stretch occupies residues 392–405 (DRGWGNGCGLFGKG). N-linked (GlcNAc...) asparagine; by host glycosylation is present at N448. 2 disulfide bridges follow: C484–C581 and C598–C629. A helical transmembrane segment spans residues 747–767 (FGGMSWITQGLMGALLLWMGV). Over 768–773 (NARDRS) the chain is Cytoplasmic. The helical transmembrane segment at 774-794 (IALAFLATGGVLVFLATNVHA) threads the bilayer. Residues 795-1219 (DTGCAIDITR…AFAEANSGGD (425 aa)) lie on the Extracellular side of the membrane. 6 cysteine pairs are disulfide-bonded: C798–C809, C849–C937, C973–C1017, C1074–C1123, C1085–C1106, and C1107–C1110. N-linked (GlcNAc...) asparagine; by host glycosylation is found at N924 and N1001. A helical membrane pass occupies residues 1220 to 1240 (VLHLALIAVFKIQPAFLVMNM). Residues 1241–1250 (LSTRWTNQEN) lie on the Cytoplasmic side of the membrane. The helical transmembrane segment at 1251–1271 (VILVLGAAFFQLASVDLQIGV) threads the bilayer. H1272 is a topological domain (lumenal). The chain crosses the membrane as a helical span at residues 1273–1293 (GILNAAAIAWMIVRAITFPTT). Residues 1294-1309 (SSVTMPVLALLTPGMR) are Cytoplasmic-facing. The helical transmembrane segment at 1310–1330 (ALYLDTYRIILLVIGICSLLH) threads the bilayer. Over 1331–1341 (ERKKTMAKKKG) the chain is Lumenal. A helical membrane pass occupies residues 1342 to 1362 (AVLLGLALTSTGWFSPTTIAA). Topologically, residues 1363–1374 (GLMVCNPNKKRG) are cytoplasmic. 2 interaction with human SPCS1 regions span residues 1374–1423 (GWPA…GKAT) and 1458–1505 (FHLI…TKRG). The chain crosses the membrane as a helical span at residues 1375–1395 (WPATEFLSAVGLMFAIVGGLA). Over 1396–1398 (ELD) the chain is Lumenal. A helical membrane pass occupies residues 1399-1419 (IESMSIPFMLAGLMAVSYVVS). Topologically, residues 1420 to 1476 (GKATDMWLERAADISWEMDAAITGSSRRLDVKLDDDGDFHLIDDPGVPWKVWVLRMS) are cytoplasmic. Residues 1427–1466 (LERAADISWEMDAAITGSSRRLDVKLDDDGDFHLIDDPGV) form an interacts with and activates NS3 protease region. An intramembrane region (helical) is located at residues 1477–1497 (CIGLAALTPWAIVPAAFGYWL). The Cytoplasmic segment spans residues 1498-2173 (TLKTTKRGGV…RMALEELPDA (676 aa)). The Peptidase S7 domain occupies 1505–1682 (GGVFWDTPSP…DRQEEPVPEA (178 aa)). Active-site charge relay system; for serine protease NS3 activity residues include H1555, D1579, and S1639. Residues 1685-1841 (PNMLRKRQMT…DSNAPIHDLQ (157 aa)) form the Helicase ATP-binding domain. The important for RNA-binding stretch occupies residues 1689 to 1692 (RKRQ). 1698-1705 (LHPGSGKT) is a binding site for ATP. Residues 1789-1792 (DEAH) carry the DEAH box motif. A Helicase C-terminal domain is found at 1852–2017 (GYEWITEYAG…GLVAQLYGPE (166 aa)). The residue at position 1893 (K1893) is an N6-acetyllysine; by host. The tract at residues 1950–1972 (NPSPITSASAAQRRGRVGRNPNQ) is disordered. The interval 2168-2172 (EELPD) is regulates the ATPase activity of NS3 helicase. A helical membrane pass occupies residues 2174-2194 (LETITLIVAITVMTGGFFLLM). At 2195–2199 (MQRKG) the chain is on the lumenal side. Positions 2200–2220 (IGKMGLGALVLTLATFFLWAA) form an intramembrane region, helical. E2221 is a topological domain (lumenal). Residues 2222–2242 (VPGTKIAGTLLIALLLMVVLI) form a helical membrane-spanning segment. At 2243 to 2257 (PEPEKQRSQTDNQLA) the chain is on the cytoplasmic side. The chain crosses the membrane as a helical span at residues 2258–2278 (VFLICVLTVVGVVAANEYGML). Residues 2279 to 2311 (EKTKADLKSMFGGKTQASGLTGLPSMALDLRPA) are Lumenal-facing. Positions 2312–2332 (TAWALYGGSTVVLTPLLKHLI) form an intramembrane region, helical. Over 2333–2368 (TSEYVTTSLASINSQAGSLFVLPRGVPFTDLDLTVG) the chain is Lumenal. A helical transmembrane segment spans residues 2369 to 2389 (LVFLGCWGQITLTTFLTAMVL). The Cytoplasmic segment spans residues 2390–2444 (ATLHYGYMLPGWQAEALRAAQRRTAAGIMKNAVVDGMVATDVPELERTTPLMQKK). A helical membrane pass occupies residues 2445–2465 (VGQVLLIGVSVAAFLVNPNVT). Residues 2466-2469 (TVRE) lie on the Lumenal side of the membrane. Residues 2470–2490 (AGVLVTAATLTLWDNGASAVW) form a helical membrane-spanning segment. Residues 2491–3432 (NSTTATGLCH…DVLIQEDRVI (942 aa)) lie on the Cytoplasmic side of the membrane. The mRNA cap 0-1 NS5-type MT domain occupies 2528 to 2793 (GRPGGRTLGE…DVNLGSGTRA (266 aa)). Position 2583 (S2583) interacts with S-adenosyl-L-methionine. Residue S2583 is modified to Phosphoserine. K2588 acts as the For 2'-O-MTase activity in catalysis. Positions 2613, 2614, 2631, 2632, 2658, and 2659 each coordinate S-adenosyl-L-methionine. D2673 acts as the For 2'-O-MTase activity in catalysis. I2674 is a binding site for S-adenosyl-L-methionine. Catalysis depends on for 2'-O-MTase activity residues K2709 and E2745. Y2747 is a binding site for S-adenosyl-L-methionine. Residues E2967, H2971, C2976, and C2979 each coordinate Zn(2+). The RdRp catalytic domain maps to 3057 to 3209 (GKMYADDTAG…KPLDDRFATA (153 aa)). Zn(2+) is bound by residues H3244, C3260, and C3379.

It in the N-terminal section; belongs to the class I-like SAM-binding methyltransferase superfamily. mRNA cap 0-1 NS5-type methyltransferase family. In terms of assembly, homodimer. Interacts (via N-terminus) with host EXOC1 (via C-terminus); this interaction results in EXOC1 degradation through the proteasome degradation pathway. Forms heterodimers with envelope protein E in the endoplasmic reticulum and Golgi. As to quaternary structure, homodimer; in the endoplasmic reticulum and Golgi. Interacts with protein prM. Interacts with non-structural protein 1. Interacts with host HSPA5. In terms of assembly, homodimer; Homohexamer when secreted. Interacts with envelope protein E. NS1 interacts with NS4B. Interacts with host complement protein CFH; this interaction leads to the degradation of C3. Interacts (via N-terminus) with serine protease NS3. As to quaternary structure, forms a heterodimer with serine protease NS3. May form homooligomers. Interacts with human SPCS1. In terms of assembly, forms a heterodimer with NS2B. Interacts with non-structural protein 2A (via N-terminus). Interacts with NS4B. Interacts with unphosphorylated RNA-directed RNA polymerase NS5; this interaction stimulates RNA-directed RNA polymerase NS5 guanylyltransferase activity. Interacts with host ILF2. Interacts with serine protease NS3. As to quaternary structure, homodimer. Interacts with host STAT2; this interaction inhibits the phosphorylation of the latter, and, when all viral proteins are present (polyprotein), targets STAT2 for degradation. Interacts with serine protease NS3. It depends on Mn(2+) as a cofactor. Requires Mg(2+) as cofactor. Specific enzymatic cleavages in vivo yield mature proteins. Cleavages in the lumen of endoplasmic reticulum are performed by host signal peptidase, whereas cleavages in the cytoplasmic side are performed by serine protease NS3. Signal cleavage at the 2K-4B site requires a prior NS3 protease-mediated cleavage at the 4A-2K site. In terms of processing, cleaved in post-Golgi vesicles by a host furin, releasing the mature small envelope protein M, and peptide pr. This cleavage is incomplete as up to 30% of viral particles still carry uncleaved prM. Post-translationally, N-glycosylated. N-glycosylated. The excreted form is glycosylated and this is required for efficient secretion of the protein from infected cells. In terms of processing, acetylated by host KAT5. Acetylation modulates NS3 RNA-binding and unwinding activities and plays an important positive role for viral replication. Post-translationally, phosphorylated on serines residues. This phosphorylation may trigger NS5 nuclear localization.

The protein resides in the host endoplasmic reticulum membrane. It is found in the virion. The protein localises to the host nucleus. It localises to the host cytoplasm. Its subcellular location is the host perinuclear region. The protein resides in the secreted. It is found in the virion membrane. The protein localises to the host cell surface. It catalyses the reaction Selective hydrolysis of -Xaa-Xaa-|-Yaa- bonds in which each of the Xaa can be either Arg or Lys and Yaa can be either Ser or Ala.. It carries out the reaction RNA(n) + a ribonucleoside 5'-triphosphate = RNA(n+1) + diphosphate. The enzyme catalyses a ribonucleoside 5'-triphosphate + H2O = a ribonucleoside 5'-diphosphate + phosphate + H(+). The catalysed reaction is ATP + H2O = ADP + phosphate + H(+). It catalyses the reaction a 5'-end (5'-triphosphoguanosine)-ribonucleoside in mRNA + S-adenosyl-L-methionine = a 5'-end (N(7)-methyl 5'-triphosphoguanosine)-ribonucleoside in mRNA + S-adenosyl-L-homocysteine. It carries out the reaction a 5'-end (N(7)-methyl 5'-triphosphoguanosine)-ribonucleoside in mRNA + S-adenosyl-L-methionine = a 5'-end (N(7)-methyl 5'-triphosphoguanosine)-(2'-O-methyl-ribonucleoside) in mRNA + S-adenosyl-L-homocysteine + H(+). Its function is as follows. Plays a role in virus budding by binding to the cell membrane and gathering the viral RNA into a nucleocapsid that forms the core of a mature virus particle. During virus entry, may induce genome penetration into the host cytoplasm after hemifusion induced by the surface proteins. Can migrate to the cell nucleus where it modulates host functions. Overcomes the anti-viral effects of host EXOC1 by sequestering and degrading the latter through the proteasome degradation pathway. Inhibits RNA silencing by interfering with host Dicer. Functionally, prevents premature fusion activity of envelope proteins in trans-Golgi by binding to envelope protein E at pH 6.0. After virion release in extracellular space, gets dissociated from E dimers. In terms of biological role, acts as a chaperone for envelope protein E during intracellular virion assembly by masking and inactivating envelope protein E fusion peptide. prM is the only viral peptide matured by host furin in the trans-Golgi network probably to avoid catastrophic activation of the viral fusion activity in acidic Golgi compartment prior to virion release. prM-E cleavage is inefficient, and many virions are only partially matured. These uncleaved prM would play a role in immune evasion. Its function is as follows. May play a role in virus budding. Exerts cytotoxic effects by activating a mitochondrial apoptotic pathway through M ectodomain. May display a viroporin activity. Binds to host cell surface receptor and mediates fusion between viral and cellular membranes. Efficient virus attachment to cell is, at least in part, mediated by host HSPA5. Envelope protein is synthesized in the endoplasmic reticulum in the form of heterodimer with protein prM. They play a role in virion budding in the ER, and the newly formed immature particle is covered with 60 spikes composed of heterodimer between precursor prM and envelope protein E. The virion is transported to the Golgi apparatus where the low pH causes dissociation of PrM-E heterodimers and formation of E homodimers. prM-E cleavage is inefficient, and many virions are only partially matured. These uncleaved prM would play a role in immune evasion. Functionally, involved in immune evasion, pathogenesis and viral replication. Once cleaved off the polyprotein, is targeted to three destinations: the viral replication cycle, the plasma membrane and the extracellular compartment. Essential for viral replication. Required for formation of the replication complex and recruitment of other non-structural proteins to the ER-derived membrane structures. Excreted as a hexameric lipoparticle that plays a role against host immune response. Antagonizing the complement function. Binds to the host macrophages and dendritic cells. Inhibits signal transduction originating from Toll-like receptor 3 (TLR3). In terms of biological role, component of the viral RNA replication complex that functions in virion assembly and antagonizes the host alpha/beta interferon antiviral response. Its function is as follows. Required cofactor for the serine protease function of NS3. May have membrane-destabilizing activity and form viroporins. Displays three enzymatic activities: serine protease, NTPase and RNA helicase. NS3 serine protease, in association with NS2B, performs its autocleavage and cleaves the polyprotein at dibasic sites in the cytoplasm: C-prM, NS2A-NS2B, NS2B-NS3, NS3-NS4A, NS4A-2K and NS4B-NS5. NS3 RNA helicase binds RNA and unwinds dsRNA in the 3' to 5' direction. Functionally, regulates the ATPase activity of the NS3 helicase activity. NS4A allows NS3 helicase to conserve energy during unwinding. In terms of biological role, functions as a signal peptide for NS4B and is required for the interferon antagonism activity of the latter. Its function is as follows. Induces the formation of ER-derived membrane vesicles where the viral replication takes place. Inhibits interferon (IFN)-induced host STAT1 phosphorylation and nuclear translocation, thereby preventing the establishment of cellular antiviral state by blocking the IFN-alpha/beta pathway. Inhibits STAT2 translocation in the nucleus after IFN-alpha treatment. Replicates the viral (+) and (-) RNA genome. Performs the capping of genomes in the cytoplasm. NS5 methylates viral RNA cap at guanine N-7 and ribose 2'-O positions. Besides its role in RNA genome replication, also prevents the establishment of cellular antiviral state by blocking the interferon-alpha/beta (IFN-alpha/beta) signaling pathway. Inhibits host TYK2 and STAT2 phosphorylation, thereby preventing activation of JAK-STAT signaling pathway. In Japanese encephalitis virus (strain SA-14) (JEV), this protein is Genome polyprotein.